Here is a 198-residue protein sequence, read N- to C-terminus: HTH-type transcriptional regulator BetI (198 aa).

Residues 8 to 68 (KIRRPQLVSA…ETMRDILRQL (61 aa)) enclose the HTH tetR-type domain. The segment at residues 31–50 (SVSLISQEAGVSSGIINHYF) is a DNA-binding region (H-T-H motif).

The protein operates within amine and polyamine biosynthesis; betaine biosynthesis via choline pathway [regulation]. Its function is as follows. Repressor involved in the biosynthesis of the osmoprotectant glycine betaine. It represses transcription of the choline transporter BetT and the genes of BetAB involved in the synthesis of glycine betaine. The sequence is that of HTH-type transcriptional regulator BetI from Vibrio vulnificus (strain YJ016).